The primary structure comprises 266 residues: Metallo-beta-lactamase domain-containing protein 1 (266 aa).

Residues 48–71 (LPQTRGPASSHRESPRGSGGAEAA) form a disordered region. Zn(2+) is bound by residues His114, His116, Asp118, His119, His169, Asp192, and His231. The tract at residues 229 to 266 (PGHGPPFRVLREASQPETEGGGNSQQEPVVGDEEPALH) is disordered.

Belongs to the metallo-beta-lactamase superfamily. Glyoxalase II family. Homodimer. Zn(2+) serves as cofactor.

It localises to the cytoplasm. It is found in the cytosol. The protein localises to the nucleus. It catalyses the reaction a ribonucleotidyl-ribonucleotide-RNA + H2O = a 3'-end ribonucleotide-RNA + a 5'-end 5'-phospho-ribonucleoside-RNA + H(+). Endoribonuclease that catalyzes the hydrolysis of histone-coding pre-mRNA 3'-end. Involved in histone pre-mRNA processing during the S-phase of the cell cycle, which is required for entering/progressing through S-phase. Cleaves histone pre-mRNA at a major and a minor cleavage site after the 5'-ACCCA-3' and the 5'-ACCCACA-3' sequence, respectively, and located downstream of the stem-loop. May require the presence of the HDE element located at the histone pre-RNA 3'-end to avoid non-specific cleavage. This is Metallo-beta-lactamase domain-containing protein 1 from Homo sapiens (Human).